The sequence spans 212 residues: Deoxyribose-phosphate aldolase (212 aa).

Catalysis depends on Asp-89, which acts as the Proton donor/acceptor. The active-site Schiff-base intermediate with acetaldehyde is the Lys-151. The Proton donor/acceptor role is filled by Lys-180.

It belongs to the DeoC/FbaB aldolase family. DeoC type 1 subfamily.

It is found in the cytoplasm. The catalysed reaction is 2-deoxy-D-ribose 5-phosphate = D-glyceraldehyde 3-phosphate + acetaldehyde. The protein operates within carbohydrate degradation; 2-deoxy-D-ribose 1-phosphate degradation; D-glyceraldehyde 3-phosphate and acetaldehyde from 2-deoxy-alpha-D-ribose 1-phosphate: step 2/2. Its function is as follows. Catalyzes a reversible aldol reaction between acetaldehyde and D-glyceraldehyde 3-phosphate to generate 2-deoxy-D-ribose 5-phosphate. This Clostridium botulinum (strain Langeland / NCTC 10281 / Type F) protein is Deoxyribose-phosphate aldolase.